A 357-amino-acid chain; its full sequence is Protein RecA (357 aa).

Residue 71–78 (GPESSGKT) participates in ATP binding.

The protein belongs to the RecA family.

The protein resides in the cytoplasm. In terms of biological role, can catalyze the hydrolysis of ATP in the presence of single-stranded DNA, the ATP-dependent uptake of single-stranded DNA by duplex DNA, and the ATP-dependent hybridization of homologous single-stranded DNAs. It interacts with LexA causing its activation and leading to its autocatalytic cleavage. In Ehrlichia canis (strain Jake), this protein is Protein RecA.